The primary structure comprises 388 residues: MNIHEYQGKEILRKYGVTTPKGFPCFSVDEAVQAAEKLGGKVWVVKAQIHAGGRGKGGGVKVAKSLDEVRKYANDILGMTLVTHQTGPEGRLVKRLLIEEGADIKKELYVGMVVDRGSQRVALMASSEGGMDIEHVAEHTPEKIHKVFIDPFKGLLDSEADDIARKIGVPEGSIPQARAFMQGLYKAFDETDASLAEINPLIVTGDDRIVALDAKFNFDSNALYRHPEIVEMRDLDEEDPAEIEASKFDLTYISLDGNIGCLVNGAGLAMATMDVIKLYGGSPANFLDVGGGATTEKVTEAFKIMLKNPDIKAILVNIFGGIMKCDVIAQGVIAAAKQVDLTVPLVVRMAGTNEELGKKILAESGLPIITANNMAEAAEKVVNAAQGK.

Residues Lys9–Glu244 form the ATP-grasp domain. ATP is bound by residues Lys46, Gly53–Gly55, Glu99, Ala102, and Glu107. 2 residues coordinate Mg(2+): Asn199 and Asp213. Substrate is bound by residues Asn264 and Gly321–Met323.

It belongs to the succinate/malate CoA ligase beta subunit family. In terms of assembly, heterotetramer of two alpha and two beta subunits. Requires Mg(2+) as cofactor.

It carries out the reaction succinate + ATP + CoA = succinyl-CoA + ADP + phosphate. It catalyses the reaction GTP + succinate + CoA = succinyl-CoA + GDP + phosphate. The protein operates within carbohydrate metabolism; tricarboxylic acid cycle; succinate from succinyl-CoA (ligase route): step 1/1. Succinyl-CoA synthetase functions in the citric acid cycle (TCA), coupling the hydrolysis of succinyl-CoA to the synthesis of either ATP or GTP and thus represents the only step of substrate-level phosphorylation in the TCA. The beta subunit provides nucleotide specificity of the enzyme and binds the substrate succinate, while the binding sites for coenzyme A and phosphate are found in the alpha subunit. The chain is Succinate--CoA ligase [ADP-forming] subunit beta from Herminiimonas arsenicoxydans.